The chain runs to 291 residues: 4-diphosphocytidyl-2-C-methyl-D-erythritol kinase (291 aa).

Lys-10 is a catalytic residue. 99 to 109 (PMGGGLGGGSS) contributes to the ATP binding site. Residue Asp-141 is part of the active site.

This sequence belongs to the GHMP kinase family. IspE subfamily. In terms of assembly, homodimer.

It catalyses the reaction 4-CDP-2-C-methyl-D-erythritol + ATP = 4-CDP-2-C-methyl-D-erythritol 2-phosphate + ADP + H(+). The protein operates within isoprenoid biosynthesis; isopentenyl diphosphate biosynthesis via DXP pathway; isopentenyl diphosphate from 1-deoxy-D-xylulose 5-phosphate: step 3/6. In terms of biological role, catalyzes the phosphorylation of the position 2 hydroxy group of 4-diphosphocytidyl-2C-methyl-D-erythritol. This Proteus mirabilis (strain HI4320) protein is 4-diphosphocytidyl-2-C-methyl-D-erythritol kinase.